The following is a 66-amino-acid chain: Phylloseptin-H9 (66 aa).

Positions 1-22 (MAFLKKSLFLVLFLGLVSLSIC) are cleaved as a signal peptide. A propeptide spanning residues 23–44 (EEEKRETEEEENDQEEDDKSEE) is cleaved from the precursor. Residues 24–44 (EEKRETEEEENDQEEDDKSEE) form a disordered region. The segment covering 30–41 (EEEENDQEEDDK) has biased composition (acidic residues). Leu-65 is subject to Leucine amide.

Expressed by the skin glands.

It localises to the secreted. Has antimicrobial activity. This is Phylloseptin-H9 from Pithecopus hypochondrialis (Orange-legged leaf frog).